The chain runs to 229 residues: uncharacterized protein (229 aa).

Positions 1-17 are cleaved as a signal peptide; that stretch reads MKKIIALMLFLTFFAHA.

This is an uncharacterized protein from Escherichia coli O157:H7.